Reading from the N-terminus, the 367-residue chain is DNA replication and repair protein RecF (367 aa).

Residue 30 to 37 (GANGSGKT) coordinates ATP.

The protein belongs to the RecF family.

The protein localises to the cytoplasm. Its function is as follows. The RecF protein is involved in DNA metabolism; it is required for DNA replication and normal SOS inducibility. RecF binds preferentially to single-stranded, linear DNA. It also seems to bind ATP. This Pseudomonas syringae pv. tomato (strain ATCC BAA-871 / DC3000) protein is DNA replication and repair protein RecF.